The sequence spans 369 residues: Phenylalanine--tRNA ligase alpha subunit (369 aa).

Glu-272 contacts Mg(2+).

Belongs to the class-II aminoacyl-tRNA synthetase family. Phe-tRNA synthetase alpha subunit type 1 subfamily. In terms of assembly, tetramer of two alpha and two beta subunits. Mg(2+) serves as cofactor.

Its subcellular location is the cytoplasm. The catalysed reaction is tRNA(Phe) + L-phenylalanine + ATP = L-phenylalanyl-tRNA(Phe) + AMP + diphosphate + H(+). The sequence is that of Phenylalanine--tRNA ligase alpha subunit from Cutibacterium acnes (strain DSM 16379 / KPA171202) (Propionibacterium acnes).